Here is a 522-residue protein sequence, read N- to C-terminus: Maturase K (522 aa).

The protein belongs to the intron maturase 2 family. MatK subfamily.

The protein resides in the plastid. The protein localises to the chloroplast. Usually encoded in the trnK tRNA gene intron. Probably assists in splicing its own and other chloroplast group II introns. This is Maturase K from Watsonia angusta.